The following is a 231-amino-acid chain: dTTP/UTP pyrophosphatase (231 aa).

The active-site Proton acceptor is the Asp-85.

This sequence belongs to the Maf family. YhdE subfamily. A divalent metal cation is required as a cofactor.

It localises to the cytoplasm. It catalyses the reaction dTTP + H2O = dTMP + diphosphate + H(+). It carries out the reaction UTP + H2O = UMP + diphosphate + H(+). Functionally, nucleoside triphosphate pyrophosphatase that hydrolyzes dTTP and UTP. May have a dual role in cell division arrest and in preventing the incorporation of modified nucleotides into cellular nucleic acids. This Psychrobacter arcticus (strain DSM 17307 / VKM B-2377 / 273-4) protein is dTTP/UTP pyrophosphatase.